Reading from the N-terminus, the 918-residue chain is von Willebrand factor A domain-containing protein DDB_G0292016 (918 aa).

The region spanning 44-172 (KRCGLYSLKN…NVKVRVVISS (129 aa)) is the VIT domain. Residues 299-467 (EFIFLIDCSG…NMEKQVMKLL (169 aa)) enclose the VWFA domain. The interval 625-814 (VDIMNQSPPI…PSAPSQQKSV (190 aa)) is disordered. Residues 650-690 (ASGALSSSILSRKRSSSPSTATKRSSSSSFSSSYLSLSSSS) are compositionally biased toward low complexity. A compositionally biased stretch (acidic residues) spans 716-746 (YESDGGDQSSEQDEEEEDDCDDFHEDLDEDL). A compositionally biased stretch (basic and acidic residues) spans 752 to 774 (DVDKKECEKECKKKDSSKVDLKV). Over residues 777-814 (SKVPLPSRSPSVSKPTTTSLLSPSPKSAPSAPSQQKSV) the composition is skewed to low complexity.

The polypeptide is von Willebrand factor A domain-containing protein DDB_G0292016 (Dictyostelium discoideum (Social amoeba)).